The primary structure comprises 578 residues: GRAM domain-containing protein 4 (578 aa).

2 disordered regions span residues 23–58 and 136–159; these read ESPN…AGPG and TEEQ…ERRS. Residues serine 24 and serine 28 each carry the phosphoserine modification. A compositionally biased stretch (basic and acidic residues) spans 44-53; it reads SPRDSEELRD. Residues 83–143 are a coiled coil; sequence HLEIALLEKH…ARTEEQMAQQ (61 aa). Helical transmembrane passes span 240–260, 334–354, and 356–376; these read VYMN…LAIL, ITQK…FFPY, and LVGL…DFIF. The disordered stretch occupies residues 415 to 435; that stretch reads QTTSSRSYVPSAPAGLGKEED. Residues 445-523 enclose the GRAM domain; that stretch reads GNFHEIFNLT…VDITDIQKYK (79 aa).

In terms of assembly, interacts with RTN4 (isoform B). In terms of tissue distribution, expressed in lung and in primary lung squamous cell carcinoma (LSCC).

The protein localises to the mitochondrion membrane. The protein resides in the endoplasmic reticulum membrane. Functionally, plays a role as a mediator of E2F1-induced apoptosis in the absence of p53/TP53. Plays a role as a mediator of E2F1-induced apoptosis in the absence of p53/TP53. Inhibits TLR9 response to nucelic acids and regulates TLR9-mediated innate immune response. The chain is GRAM domain-containing protein 4 from Homo sapiens (Human).